We begin with the raw amino-acid sequence, 251 residues long: Phosphate import ATP-binding protein PstB 2 (251 aa).

The ABC transporter domain maps to 5-246; it reads ITTKDVHLYY…PDKEQTADYL (242 aa). 37–44 is an ATP binding site; it reads GPSGCGKS.

It belongs to the ABC transporter superfamily. Phosphate importer (TC 3.A.1.7) family. The complex is composed of two ATP-binding proteins (PstB), two transmembrane proteins (PstC and PstA) and a solute-binding protein (PstS).

It is found in the cell membrane. It carries out the reaction phosphate(out) + ATP + H2O = ADP + 2 phosphate(in) + H(+). Its function is as follows. Part of the ABC transporter complex PstSACB involved in phosphate import. Responsible for energy coupling to the transport system. This is Phosphate import ATP-binding protein PstB 2 from Ligilactobacillus salivarius (strain UCC118) (Lactobacillus salivarius).